Consider the following 371-residue polypeptide: MTFSPEPAHQHGQPPRTAILLINLGTPDAPTPKAVGRYLKAFLSDPRVVEIPRLAWLPILHGLILPFRSRASAMKYESIWLREAHMTGSPLLVYTERQAHALQLLMQQQGHDVTVACAMRYGNPSIESVMEALRRQGTEQILLLPLYPQFSGTTTATAFDEAFRVLSTWRNQPELRLVKHFHDHPAYISALHKQVGGYWAQHGKPDFARGDKLILSFHGLPRRLLDLGDPYHCECLKTGRLLGEALGLQPGQFQVTFQSRFGKAEWLQPYTAPTLAELGKVGTQRVDVFCPGFPADCIETLEEIAMEGQSEFRLAGGQDFHFIPCLNDAEAWIAGLADIALQHLQGWPLNVPHPHELEARRSRAQARGAGA.

Residues His-218 and Glu-299 each coordinate Fe cation.

It belongs to the ferrochelatase family.

Its subcellular location is the cytoplasm. The enzyme catalyses heme b + 2 H(+) = protoporphyrin IX + Fe(2+). Its pathway is porphyrin-containing compound metabolism; protoheme biosynthesis; protoheme from protoporphyrin-IX: step 1/1. Functionally, catalyzes the ferrous insertion into protoporphyrin IX. The protein is Ferrochelatase of Cupriavidus metallidurans (strain ATCC 43123 / DSM 2839 / NBRC 102507 / CH34) (Ralstonia metallidurans).